A 299-amino-acid chain; its full sequence is ATP phosphoribosyltransferase (299 aa).

This sequence belongs to the ATP phosphoribosyltransferase family. Long subfamily. The cofactor is Mg(2+).

The protein localises to the cytoplasm. The enzyme catalyses 1-(5-phospho-beta-D-ribosyl)-ATP + diphosphate = 5-phospho-alpha-D-ribose 1-diphosphate + ATP. It functions in the pathway amino-acid biosynthesis; L-histidine biosynthesis; L-histidine from 5-phospho-alpha-D-ribose 1-diphosphate: step 1/9. Feedback inhibited by histidine. Catalyzes the condensation of ATP and 5-phosphoribose 1-diphosphate to form N'-(5'-phosphoribosyl)-ATP (PR-ATP). Has a crucial role in the pathway because the rate of histidine biosynthesis seems to be controlled primarily by regulation of HisG enzymatic activity. This Campylobacter jejuni subsp. jejuni serotype O:2 (strain ATCC 700819 / NCTC 11168) protein is ATP phosphoribosyltransferase.